The chain runs to 1052 residues: Error-prone DNA polymerase (1052 aa).

The protein belongs to the DNA polymerase type-C family. DnaE2 subfamily.

The protein resides in the cytoplasm. The catalysed reaction is DNA(n) + a 2'-deoxyribonucleoside 5'-triphosphate = DNA(n+1) + diphosphate. Its function is as follows. DNA polymerase involved in damage-induced mutagenesis and translesion synthesis (TLS). It is not the major replicative DNA polymerase. The protein is Error-prone DNA polymerase of Bordetella bronchiseptica (strain ATCC BAA-588 / NCTC 13252 / RB50) (Alcaligenes bronchisepticus).